We begin with the raw amino-acid sequence, 315 residues long: GTP cyclohydrolase MptA (315 aa).

Belongs to the GTP cyclohydrolase IV family. Homodimer. Fe(2+) is required as a cofactor.

It carries out the reaction GTP + H2O = 7,8-dihydroneopterin 2',3'-cyclic phosphate + formate + diphosphate + H(+). Its pathway is cofactor biosynthesis; 5,6,7,8-tetrahydromethanopterin biosynthesis. In terms of biological role, converts GTP to 7,8-dihydro-D-neopterin 2',3'-cyclic phosphate, the first intermediate in the biosynthesis of coenzyme methanopterin. The protein is GTP cyclohydrolase MptA of Methanococcus maripaludis (strain C7 / ATCC BAA-1331).